The sequence spans 96 residues: NADH-quinone oxidoreductase subunit K (96 aa).

A run of 3 helical transmembrane segments spans residues 1 to 21 (MNYI…VLVR), 25 to 45 (IIVF…FVAF), and 56 to 76 (VIAF…LAII).

The protein belongs to the complex I subunit 4L family. As to quaternary structure, NDH-1 is composed of 14 different subunits. Subunits NuoA, H, J, K, L, M, N constitute the membrane sector of the complex.

The protein localises to the cell membrane. It catalyses the reaction a quinone + NADH + 5 H(+)(in) = a quinol + NAD(+) + 4 H(+)(out). Functionally, NDH-1 shuttles electrons from NADH, via FMN and iron-sulfur (Fe-S) centers, to quinones in the respiratory chain. The immediate electron acceptor for the enzyme in this species is believed to be a menaquinone. Couples the redox reaction to proton translocation (for every two electrons transferred, four hydrogen ions are translocated across the cytoplasmic membrane), and thus conserves the redox energy in a proton gradient. The sequence is that of NADH-quinone oxidoreductase subunit K from Thermobifida fusca (strain YX).